The chain runs to 141 residues: ATP synthase epsilon chain (141 aa).

It belongs to the ATPase epsilon chain family. In terms of assembly, F-type ATPases have 2 components, CF(1) - the catalytic core - and CF(0) - the membrane proton channel. CF(1) has five subunits: alpha(3), beta(3), gamma(1), delta(1), epsilon(1). CF(0) has three main subunits: a, b and c.

The protein localises to the cell inner membrane. In terms of biological role, produces ATP from ADP in the presence of a proton gradient across the membrane. This is ATP synthase epsilon chain from Paraburkholderia phymatum (strain DSM 17167 / CIP 108236 / LMG 21445 / STM815) (Burkholderia phymatum).